The sequence spans 602 residues: Zinc finger MYND domain-containing protein 11 (602 aa).

The region spanning 6 to 82 (KRRQADTKAI…CKGSKAGIEQ (77 aa)) is the SAMD1-like winged helix (WH) domain. Residues 100-148 (DWYCFECHLPGEVLICDLCFRVYHSKCLSDEFRLRDSSSHWQCPVCRSI) form a PHD-type zinc finger. Positions 149–255 (KKKHSNKQEM…KDTCHELDEL (107 aa)) constitute a Bromo domain. Positions 258, 261, 277, and 281 each coordinate Zn(2+). The PWWP domain maps to 280–331 (NHELVWAKMKGFGFWPAKVMQKEDNQVDVRFFGHHHQRAWIPSENIQDITVN). Positions 291 to 310 (FGFWPAKVMQKEDNQVDVRF) are aromatic cage required for H3.3K36me3-specific binding. A Glycyl lysine isopeptide (Lys-Gly) (interchain with G-Cter in SUMO2) cross-link involves residue lysine 366. The interval 366–461 (KNEDRGEEEA…HRSTQTTSDG (96 aa)) is disordered. The Nuclear localization signal signature appears at 394 to 400 (RAKKGRR). Glycyl lysine isopeptide (Lys-Gly) (interchain with G-Cter in SUMO2) cross-links involve residues lysine 407 and lysine 408. Serine 421 carries the phosphoserine modification. Residues 435–461 (SVSTQTKKLSASSPRMLHRSTQTTSDG) are compositionally biased toward polar residues. Zn(2+) contacts are provided by cysteine 563, cysteine 566, cysteine 574, cysteine 575, cysteine 581, cysteine 585, histidine 594, and cysteine 598. An MYND-type zinc finger spans residues 563-598 (CYNCEEEAMYHCCWNTSYCSIKCQQEHWHAEHKRTC).

In terms of assembly, homooligomer; forms homooligomers via its C-terminus. Interacts with histone H3.3 trimethylated at 'Lys-36' (H3.3K36me3). Interacts (via MYND-type zinc finger) with NCOR1. Interacts (via MYND-type zinc finger) with MGA protein (via PXLXP motif). Interacts (via MYND-type zinc finger) with EZH2. Interacts with EMSY and E2F6. Interacts with PIAS1 and UBE2I. Post-translationally, ubiquitinated, leading to proteasomal degradation. In terms of processing, sumoylated following its interaction with PIAS1 and UBE2I.

The protein localises to the nucleus. It localises to the chromosome. Functionally, chromatin reader that specifically recognizes and binds histone H3.3 trimethylated at 'Lys-36' (H3.3K36me3) and regulates RNA polymerase II elongation. Does not bind other histone H3 subtypes (H3.1 or H3.2). Colocalizes with highly expressed genes and functions as a transcription corepressor by modulating RNA polymerase II at the elongation stage. Binds non-specifically to dsDNA. Acts as a tumor-suppressor by repressing a transcriptional program essential for tumor cell growth. This Mus musculus (Mouse) protein is Zinc finger MYND domain-containing protein 11 (Zmynd11).